Consider the following 361-residue polypeptide: PTI1-like tyrosine-protein kinase At3g15890 (361 aa).

The region spanning 39–328 (FNYDNKLGEG…ISELEANPLF (290 aa)) is the Protein kinase domain. Residues 45 to 53 (LGEGRFGSV) and Lys-67 each bind ATP. The active-site Proton acceptor is Asp-165. Disordered regions lie at residues 195 to 219 (TGDG…SGKE) and 323 to 361 (EANP…QQQE). Residues 351-361 (LEDKDHQQQQE) are compositionally biased toward basic and acidic residues.

Belongs to the protein kinase superfamily. Tyr protein kinase family.

The catalysed reaction is L-tyrosyl-[protein] + ATP = O-phospho-L-tyrosyl-[protein] + ADP + H(+). This chain is PTI1-like tyrosine-protein kinase At3g15890, found in Arabidopsis thaliana (Mouse-ear cress).